Here is a 156-residue protein sequence, read N- to C-terminus: RNA polymerase sigma factor SigS (156 aa).

Residues 29-44 (EYYQLLLIKMWQLSQI) carry the Polymerase core binding motif. The segment at residues 126-145 (QYEIADIMSLSTSTIKLIKA) is a DNA-binding region (H-T-H motif).

The protein belongs to the sigma-70 factor family.

Sigma factors are initiation factors that promote the attachment of RNA polymerase to specific initiation sites and are then released. Sigma-S contributes to the protection against external stress, thus playing a role in cellular fitness and survival. This chain is RNA polymerase sigma factor SigS (sigS), found in Staphylococcus aureus (strain MRSA252).